An 85-amino-acid chain; its full sequence is Putative membrane protein insertion efficiency factor (85 aa).

The interval 62–85 (KGGFDPVPLKKDKSASKHSHKHNH) is disordered.

It belongs to the UPF0161 family.

It localises to the cell membrane. Its function is as follows. Could be involved in insertion of integral membrane proteins into the membrane. This chain is Putative membrane protein insertion efficiency factor, found in Staphylococcus aureus (strain Mu3 / ATCC 700698).